Here is a 449-residue protein sequence, read N- to C-terminus: FAD-linked oxidoreductase janO (449 aa).

One can recognise an FAD-binding PCMH-type domain in the interval 32 to 203; that stretch reads PDAQPLAIIK…TRFHLNTRPL (172 aa).

This sequence belongs to the oxygen-dependent FAD-linked oxidoreductase family. It depends on FAD as a cofactor.

It functions in the pathway secondary metabolite biosynthesis. FAD-linked oxidoreductase; part of the gene cluster that mediates the biosynthesis of the indole diterpenes janthitremanes such as shearinine K or shearinine A. The geranylgeranyl diphosphate (GGPP) synthase janG catalyzes the first step in janthitremane biosynthesis via conversion of farnesyl pyrophosphate and isopentyl pyrophosphate into geranylgeranyl pyrophosphate (GGPP). Condensation of indole-3-glycerol phosphate with GGPP by the prenyl transferase janC then forms 3-geranylgeranylindole (3-GGI). Epoxidation by the FAD-dependent monooxygenase janM leads to a epoxidized-GGI that is substrate of the terpene cyclase janB for cyclization to yield paspaline. Paspaline is subsequently converted to 13-desoxypaspaline by the cytochrome P450 monooxygenase janP, via beta-PC-M6 in a series of alpha-face oxidations. The cytochrome P450 monooxygenase janQ is proposed to carry out sequential beta-face oxidation steps at C-7 and C-13 of 13-desoxypaspaline to form paspalicine and paspalinine respectively. The indole diterpene prenyltransferase janD may then convert paspalinine into shearinine K which is substrate of janO and/or additional enzymes for oxidation and cyclization to generate shearinine A. The protein is FAD-linked oxidoreductase janO of Penicillium janthinellum (Penicillium vitale).